The chain runs to 352 residues: Ion-translocating oxidoreductase complex subunit D (352 aa).

4 helical membrane-spanning segments follow: residues 20–40, 42–62, 89–109, and 123–143; these read IMLL…WFFG, GTLV…ALVL, IPPL…VIIA, and PAMI…TSWL. FMN phosphoryl threonine is present on Thr187. Helical transmembrane passes span 214–234, 242–262, 267–287, 301–321, and 322–342; these read ILAG…GLWL, WHIP…GWLF, LAAP…FFIL, LIFG…GGYP, and DGVA…DYYT.

The protein belongs to the NqrB/RnfD family. As to quaternary structure, the complex is composed of six subunits: RsxA, RsxB, RsxC, RsxD, RsxE and RsxG. FMN is required as a cofactor.

The protein resides in the cell inner membrane. Its function is as follows. Part of a membrane-bound complex that couples electron transfer with translocation of ions across the membrane. Required to maintain the reduced state of SoxR. This Shigella sonnei (strain Ss046) protein is Ion-translocating oxidoreductase complex subunit D.